Reading from the N-terminus, the 98-residue chain is Acylphosphatase (98 aa).

The 87-residue stretch at 12 to 98 (RLSAWVHGHV…DATMTGFSER (87 aa)) folds into the Acylphosphatase-like domain. Active-site residues include Arg27 and Asn45.

It belongs to the acylphosphatase family.

It catalyses the reaction an acyl phosphate + H2O = a carboxylate + phosphate + H(+). In Mycolicibacterium smegmatis (strain ATCC 700084 / mc(2)155) (Mycobacterium smegmatis), this protein is Acylphosphatase (acyP).